Reading from the N-terminus, the 530-residue chain is NMDA receptor synaptonuclear signaling and neuronal migration factor (530 aa).

Gly2 carries N-myristoyl glycine lipidation. Residues 2–233 (GAAASRRRAL…FSFQTATTTM (232 aa)) form a necessary and sufficient to elicit dendritic processes and synaptic contacts region. 2 disordered regions span residues 34-67 (SQSHPENRNGADHLLADAYSGHDGSPEMQPAPQN) and 125-197 (KGRR…GRRK). The span at 38-48 (PENRNGADHLL) shows a compositional bias: basic and acidic residues. Positions 125 to 137 (KGRRQRHPHHHSQ) are enriched in basic residues. Residues 153–162 (PCQSWAGSRQ) show a composition bias toward polar residues. Ser204 is subject to Phosphoserine. A Nuclear localization signal motif is present at residues 247–250 (RRKR). A disordered region spans residues 285 to 312 (RSFSRSWSDPTPMKADTSHDSRDSSDLQ). Phosphoserine is present on residues Ser290 and Ser292. Positions 300-309 (DTSHDSRDSS) are enriched in basic and acidic residues.

The protein belongs to the NSMF family. In terms of assembly, interacts with KPNA1; the interaction occurs in a calcium-independent manner after synaptic NMDA receptor stimulation and is required for nuclear import of NSMF but is competed by CABP1. Interacts (via the central NLS-containing motif region) with CABP1 (via EF-hands 1 and 2); the interaction occurs in a calcium-dependent manner after synaptic NMDA receptor stimulation and prevents the nuclear import of NSMF. Cannot be competed by calmodulin. Proteolytically processed after NMDA receptor activation. Cleaved in a calcium-dependent and calpain-sensitive manner. Calpain cleavage is essential for the translocation process from dendrites to the nucleus. In terms of tissue distribution, highly expressed in adult and fetal brain. Weakly expressed in heart, liver, spleen, testis, small intestine, skeletal muscle, peripheral white blood cells and kidney.

It is found in the nucleus. Its subcellular location is the nucleus envelope. The protein resides in the nucleus membrane. It localises to the nucleus matrix. The protein localises to the cytoplasm. It is found in the cell cortex. Its subcellular location is the cytoskeleton. The protein resides in the cell membrane. It localises to the cell projection. The protein localises to the dendrite. It is found in the synapse. Its subcellular location is the synaptosome. The protein resides in the postsynaptic density. It localises to the membrane. Functionally, couples NMDA-sensitive glutamate receptor signaling to the nucleus and triggers long-lasting changes in the cytoarchitecture of dendrites and spine synapse processes. Part of the cAMP response element-binding protein (CREB) shut-off signaling pathway. Stimulates outgrowth of olfactory axons and migration of gonadotropin-releasing hormone (GnRH) and luteinizing-hormone-releasing hormone (LHRH) neuronal cells. The polypeptide is NMDA receptor synaptonuclear signaling and neuronal migration factor (NSMF) (Homo sapiens (Human)).